Consider the following 330-residue polypeptide: Beta-ketoacyl-[acyl-carrier-protein] synthase III 2 (330 aa).

Active-site residues include C118 and H246. The ACP-binding stretch occupies residues 247–251; the sequence is QANLR. Residue N276 is part of the active site.

Belongs to the thiolase-like superfamily. FabH family. In terms of assembly, homodimer.

The protein resides in the cytoplasm. It catalyses the reaction malonyl-[ACP] + acetyl-CoA + H(+) = 3-oxobutanoyl-[ACP] + CO2 + CoA. It functions in the pathway lipid metabolism; fatty acid biosynthesis. Functionally, catalyzes the condensation reaction of fatty acid synthesis by the addition to an acyl acceptor of two carbons from malonyl-ACP. Catalyzes the first condensation reaction which initiates fatty acid synthesis and may therefore play a role in governing the total rate of fatty acid production. Possesses both acetoacetyl-ACP synthase and acetyl transacylase activities. Its substrate specificity determines the biosynthesis of branched-chain and/or straight-chain of fatty acids. The sequence is that of Beta-ketoacyl-[acyl-carrier-protein] synthase III 2 from Streptomyces coelicolor (strain ATCC BAA-471 / A3(2) / M145).